The sequence spans 247 residues: Adenosylcobinamide-GDP ribazoletransferase (247 aa).

The next 5 membrane-spanning stretches (helical) occupy residues I34–V54, A57–G77, G113–L133, I138–Y158, and V194–I214.

This sequence belongs to the CobS family. It depends on Mg(2+) as a cofactor.

It localises to the cell inner membrane. It catalyses the reaction alpha-ribazole + adenosylcob(III)inamide-GDP = adenosylcob(III)alamin + GMP + H(+). The enzyme catalyses alpha-ribazole 5'-phosphate + adenosylcob(III)inamide-GDP = adenosylcob(III)alamin 5'-phosphate + GMP + H(+). It participates in cofactor biosynthesis; adenosylcobalamin biosynthesis; adenosylcobalamin from cob(II)yrinate a,c-diamide: step 7/7. Its function is as follows. Joins adenosylcobinamide-GDP and alpha-ribazole to generate adenosylcobalamin (Ado-cobalamin). Also synthesizes adenosylcobalamin 5'-phosphate from adenosylcobinamide-GDP and alpha-ribazole 5'-phosphate. The polypeptide is Adenosylcobinamide-GDP ribazoletransferase (Shigella flexneri serotype 5b (strain 8401)).